Consider the following 29-residue polypeptide: Galanin (29 aa).

Thr29 carries the post-translational modification Threonine amide.

Belongs to the galanin family.

The protein resides in the secreted. Its function is as follows. Contracts smooth muscle of the gastrointestinal and genitourinary tract, regulates growth hormone release, modulates insulin release, and may be involved in the control of adrenal secretion. The sequence is that of Galanin (GAL) from Gallus gallus (Chicken).